Here is a 27-residue protein sequence, read N- to C-terminus: iraD leader peptide (27 aa).

A short protein whose stop codon overlaps with the start codon of downstream iraD; its mRNA secondary structure is predicted to fold and sequester the Shine-Dalgarno sequence of iraD. When this protein is expressed the downstream iraD is also expressed due to ribosomal coupling. The sequence is that of iraD leader peptide (idlP) from Escherichia coli (strain K12).